Reading from the N-terminus, the 311-residue chain is Meteorin-like protein (311 aa).

An N-terminal signal peptide occupies residues 1–45 (MRGAVWAARRRAGQQWPRSPGPGPGPPPPPPLLLLLLLLLGGASA). Cys-52 and Cys-75 are disulfide-bonded. The N-linked (GlcNAc...) asparagine glycan is linked to Asn-103. 4 disulfide bridges follow: Cys-107/Cys-143, Cys-188/Cys-260, Cys-191/Cys-284, and Cys-201/Cys-306.

Belongs to the meteorin family. In terms of processing, N-glycosylated. Highly expressed in subcutaneous adipose tissue.

The protein localises to the secreted. Hormone induced following exercise or cold exposure that promotes energy expenditure. Induced either in the skeletal muscle after exercise or in adipose tissue following cold exposure and is present in the circulation. Able to stimulate energy expenditure associated with the browning of the white fat depots and improves glucose tolerance. Does not promote an increase in a thermogenic gene program via direct action on adipocytes, but acts by stimulating several immune cell subtypes to enter the adipose tissue and activate their prothermogenic actions. Stimulates an eosinophil-dependent increase in IL4 expression and promotes alternative activation of adipose tissue macrophages, which are required for the increased expression of the thermogenic and anti-inflammatory gene programs in fat. Required for some cold-induced thermogenic responses, suggesting a role in metabolic adaptations to cold temperatures. The chain is Meteorin-like protein (Metrnl) from Mus musculus (Mouse).